The chain runs to 342 residues: Platelet-activating factor receptor (342 aa).

Residues 1–16 are Extracellular-facing; it reads MEPNNSFRVDSEFRYT. An N-linked (GlcNAc...) asparagine glycan is attached at N4. Residues 17-38 traverse the membrane as a helical segment; it reads LFPIFYSIVFVLGVIANSYVLW. Over 39–54 the chain is Cytoplasmic; it reads VFARLYPSKKFNEIKI. The helical transmembrane segment at 55–74 threads the bilayer; that stretch reads FMVNLTMADLLFLVTLPLWI. Residues 75–91 lie on the Extracellular side of the membrane; sequence VYYYNQGDWILPKFLCN. An intrachain disulfide couples C90 to C173. Residues 92 to 113 traverse the membrane as a helical segment; it reads LAGCFFFINTYCSVAFLAVITY. Over 114-133 the chain is Cytoplasmic; the sequence is NRFQAVTRPIKTAQATTRKR. A helical transmembrane segment spans residues 134–155; sequence GFLLSLIIWVSIVGAASYFFVL. The Extracellular portion of the chain corresponds to 156–184; that stretch reads DSTNSEPKKTGSGNITRCFEHYEKGSIPV. A glycan (N-linked (GlcNAc...) asparagine) is linked at N169. A helical membrane pass occupies residues 185-205; that stretch reads LIIHIFLVFSFFLVFLIILFC. Residues 206 to 233 lie on the Cytoplasmic side of the membrane; the sequence is NLVIIRTLLTQQVQMQRNAEVKRRALWM. The chain crosses the membrane as a helical span at residues 234 to 254; it reads VCTVLAVFVICFVPHHLVQLP. Topologically, residues 255 to 276 are extracellular; it reads WTLAELGFQDTDFHQGINDAHQ. A helical membrane pass occupies residues 277–296; the sequence is VTLCLLSTNCVLDPIIYCFL. At 297-342 the chain is on the cytoplasmic side; it reads TKKFRKHLTEKLYSMRESRKCSRATSETGTEVVVQLKDAPIKSLKY.

This sequence belongs to the G-protein coupled receptor 1 family. In terms of assembly, interacts with ARRB1.

The protein resides in the cell membrane. In terms of biological role, receptor for platelet activating factor, a chemotactic phospholipid mediator that possesses potent inflammatory, smooth-muscle contractile and hypotensive activity. Seems to mediate its action via a G protein that activates a phosphatidylinositol-calcium second messenger system. The polypeptide is Platelet-activating factor receptor (Capra hircus (Goat)).